A 103-amino-acid chain; its full sequence is Co-chaperonin GroES (103 aa).

This sequence belongs to the GroES chaperonin family. As to quaternary structure, heptamer of 7 subunits arranged in a ring. Interacts with the chaperonin GroEL.

The protein localises to the cytoplasm. Functionally, together with the chaperonin GroEL, plays an essential role in assisting protein folding. The GroEL-GroES system forms a nano-cage that allows encapsulation of the non-native substrate proteins and provides a physical environment optimized to promote and accelerate protein folding. GroES binds to the apical surface of the GroEL ring, thereby capping the opening of the GroEL channel. The chain is Co-chaperonin GroES from Trichodesmium erythraeum (strain IMS101).